The chain runs to 99 residues: Protein IDA-LIKE 3 (99 aa).

Positions 1–32 (MSSRSHRSRKYQLTRTIPILVLLLVLLSCCNG) are cleaved as a signal peptide. Polar residues predominate over residues 36 to 45 (TNVFNTSSPP). 2 disordered regions span residues 36–58 (TNVF…HDHV) and 73–99 (SLPR…STKT). Residues 46–58 (KQKDVVSPPHDHV) show a composition bias toward basic and acidic residues.

As to expression, expressed in flowers and seedlings. Detected at the base of pedicel, in the floral abscission zone and in vascular tissues.

It localises to the secreted. Its subcellular location is the extracellular space. Its function is as follows. May be involved in floral abscission. The polypeptide is Protein IDA-LIKE 3 (IDL3) (Arabidopsis thaliana (Mouse-ear cress)).